A 1217-amino-acid polypeptide reads, in one-letter code: Genetic suppressor element 1 (1217 aa).

Positions 1–155 (MKGMSHEPKS…SRSSSGGRER (155 aa)) are disordered. Position 10 is a phosphoserine (Ser10). A compositionally biased stretch (polar residues) spans 15–33 (MLSTATRTTATVNPLTPSP). Low complexity-rich tracts occupy residues 43-63 (SPATSSALSAQAAPSSSFAAA) and 76-89 (GSSLSSESSPVSSP). Phosphoserine is present on residues Ser84 and Ser95. The span at 103 to 114 (VPMGPIIVPPGG) shows a compositional bias: low complexity. At Arg305 the chain carries Asymmetric dimethylarginine. Residues 321–403 (ERMSGLSAER…REKELLAAKA (83 aa)) are a coiled coil. 2 disordered regions span residues 324–385 (SGLS…EREL) and 418–465 (RGHA…HHTV). Residues 331 to 385 (LQMDEELRREREREREREREREADREREKEREREREKEREQEKEREREKEREREL) show a composition bias toward basic and acidic residues. Thr433 bears the Phosphothreonine mark. Residues 450-465 (PVQHPLHPVPTPHHTV) show a composition bias toward low complexity. Lys496 carries the N6-acetyllysine modification. Disordered stretches follow at residues 526–579 (HLDM…QLHA), 633–675 (KAEE…GPFL), and 699–720 (FGELSGPLKPGSPYRPPVPRAP). Composition is skewed to basic and acidic residues over residues 551–561 (NRHEPGGRDPP) and 633–645 (KAEEGPRKREPAP). The segment covering 711–720 (PYRPPVPRAP) has biased composition (pro residues). Lys739 carries the N6-acetyllysine modification. Ser766 carries the post-translational modification Phosphoserine. Disordered regions lie at residues 807-858 (KEEL…NNSP), 903-930 (ADSLTNSPRDSPAVSLSEPATQQASLDV), 948-981 (EPGKLEQVRPQELSRVQELAPASGEKARLSEAPG), and 1068-1122 (LQSS…PKRK). Residues 813-822 (QKRRKRRRML) show a composition bias toward basic residues. Phosphoserine is present on residues Ser826 and Ser828. 2 stretches are compositionally biased toward polar residues: residues 831-840 (TIQSKRQTPS) and 847-858 (TRYSPDEMNNSP). Ser857 is modified (phosphoserine). Thr907 carries the phosphothreonine modification. A Phosphoserine modification is found at Ser909. A compositionally biased stretch (polar residues) spans 1068-1085 (LQSSSRAPPPQHNGQQEP). The span at 1099-1117 (RDSEEEEEEDDEDGEDEEE) shows a compositional bias: acidic residues. Phosphoserine is present on Ser1101. The stretch at 1127–1201 (EAVFEAYQEH…ELDHLRKCLA (75 aa)) forms a coiled coil.

May be a component of a BHC histone deacetylase complex that contains HDAC1, HDAC2, HMG20B/BRAF35, KDM1A, RCOR1/CoREST, PHF21A/BHC80, ZMYM2, ZNF217, ZMYM3, GSE1 and GTF2I.

The chain is Genetic suppressor element 1 (GSE1) from Homo sapiens (Human).